We begin with the raw amino-acid sequence, 22 residues long: Putative lactoylglutathione lyase (22 aa).

A disordered region spans residues 1-22 (ITACLDPDGWKEPGPLPGISTK). Residue E12 is the Proton donor/acceptor of the active site.

The protein belongs to the glyoxalase I family. Requires Zn(2+) as cofactor.

It catalyses the reaction (R)-S-lactoylglutathione = methylglyoxal + glutathione. Its pathway is secondary metabolite metabolism; methylglyoxal degradation; (R)-lactate from methylglyoxal: step 1/2. Functionally, catalyzes the conversion of hemimercaptal, formed from methylglyoxal and glutathione, to S-lactoylglutathione. This Pinus strobus (Eastern white pine) protein is Putative lactoylglutathione lyase.